The primary structure comprises 327 residues: Ribosomal RNA small subunit methyltransferase H (327 aa).

S-adenosyl-L-methionine-binding positions include G37–Y39, D55, F82, D99, and Q106. The segment at I303–F327 is disordered.

The protein belongs to the methyltransferase superfamily. RsmH family.

Its subcellular location is the cytoplasm. The enzyme catalyses cytidine(1402) in 16S rRNA + S-adenosyl-L-methionine = N(4)-methylcytidine(1402) in 16S rRNA + S-adenosyl-L-homocysteine + H(+). Functionally, specifically methylates the N4 position of cytidine in position 1402 (C1402) of 16S rRNA. The polypeptide is Ribosomal RNA small subunit methyltransferase H (Jannaschia sp. (strain CCS1)).